A 244-amino-acid chain; its full sequence is EEF1A lysine methyltransferase 2 (244 aa).

The interval M1–F27 is disordered. At S21 the chain carries Phosphoserine.

Belongs to the class I-like SAM-binding methyltransferase superfamily. EFM4 family.

It localises to the cytoplasm. Its subcellular location is the nucleus. It catalyses the reaction L-lysyl-[protein] + 3 S-adenosyl-L-methionine = N(6),N(6),N(6)-trimethyl-L-lysyl-[protein] + 3 S-adenosyl-L-homocysteine + 3 H(+). Protein-lysine methyltransferase that selectively catalyzes the trimethylation of EEF1A at 'Lys-318'. The chain is EEF1A lysine methyltransferase 2 from Mus musculus (Mouse).